The primary structure comprises 497 residues: KDDFKGPEFRSRSKMKTENLKKRGEGLHGIVSCTACGQQVNHFQKDSIYRHPTLKVLICKNCYKYYMSDDISRDADGMDEQCRWCAEGGNLICCDFCHNAFCKKCILRNLGRKELSAIMDENSQWYCYICRPEPLLDLVTACHSVFKNLEQLLQQNKKKIKVESEKSNKLFEHTHRFSPKKNVSSCNGEEKKSDDAYSGSVTYSFTALMVPKDIVKKTKKLVETTASMNTSFVRFLKQASENPEVSPVTKLRQLKAFKSVLNDVKKVHLALEGSLNVEIRTLEALNKETVTKEHKAEGVKPDTEVTKVEVYCAPKKKDFSKCATKLSVKQVDSEINGQSLPVVGQPVHKTTSAEDKKSSRKDPHFEPANTSEALDMDFSLLIFPLIFIFFELSSCYFLLSSSFLFQSCFSLTSIFLLQIVDLLFFKFYFFFKISLISIFLLQIVHLLFSLNLFSSKLFFLFLNFFSFFKLSTFQIPNFSSKMLFPDFYLPLPILLFL.

Glycyl lysine isopeptide (Lys-Gly) (interchain with G-Cter in SUMO2) cross-links involve residues K1 and K5. The ADD domain occupies 21 to 158 (KKRGEGLHGI…LEQLLQQNKK (138 aa)). The GATA-type; atypical zinc finger occupies 32–68 (SCTACGQQVNHFQKDSIYRHPTLKVLICKNCYKYYMS). A PHD-type; atypical zinc finger spans residues 79–134 (DEQCRWCAEGGNLICCDFCHNAFCKKCILRNLGRKELSAIMDENSQWYCYICRPEP). A Glycyl lysine isopeptide (Lys-Gly) (interchain with G-Cter in SUMO2) cross-link involves residue K161. The residue at position 178 (S178) is a Phosphoserine. A Glycyl lysine isopeptide (Lys-Gly) (interchain with G-Cter in SUMO2) cross-link involves residue K300. Residues 346–368 (PVHKTTSAEDKKSSRKDPHFEPA) are disordered. Over residues 351 to 365 (TSAEDKKSSRKDPHF) the composition is skewed to basic and acidic residues.

Belongs to the SNF2/RAD54 helicase family. Interacts with DAXX to form the chromatin remodeling complex ATRX:DAXX. Probably binds EZH2. Binds annexin V in a calcium and phosphatidylcholine/phosphatidylserine-dependent manner. Interacts directly with CBX5 via the PxVxL motif. Interacts with RAD50, MRE11 and NBN; indicative for an association with the MRN complex. Interacts with histone MACROH2A1. Interacts with histone H3 peptides methylated at 'Lys-10' with preferences H3K9me3 &gt; H3K9me2 &gt; H3K9me1. Interacts with histone H3 peptides unmethylated at 'Lys-5' (H3K4me0). Interacts with MECP2, SMC1 and SMC3. Interacts with SETDB1, TRIM28 and ZNF274. Expressed in all tissues except developing testis.

The protein localises to the nucleus. It localises to the chromosome. The protein resides in the telomere. Its subcellular location is the PML body. It carries out the reaction ATP + H2O = ADP + phosphate + H(+). In terms of biological role, involved in transcriptional regulation and chromatin remodeling. Facilitates DNA replication in multiple cellular environments and is required for efficient replication of a subset of genomic loci. Binds to DNA tandem repeat sequences in both telomeres and euchromatin and in vitro binds DNA quadruplex structures. May help stabilizing G-rich regions into regular chromatin structures by remodeling G4 DNA and incorporating H3.3-containing nucleosomes. Catalytic component of the chromatin remodeling complex ATRX:DAXX which has ATP-dependent DNA translocase activity and catalyzes the replication-independent deposition of histone H3.3 in pericentric DNA repeats outside S-phase and telomeres, and the in vitro remodeling of H3.3-containing nucleosomes. Its heterochromatin targeting is proposed to involve a combinatorial readout of histone H3 modifications (specifically methylation states of H3K9 and H3K4) and association with CBX5. May be involved in transcriptional regulation of telomeric repeat-containing RNA (TERRA). Acts as a negative regulator of chromatin incorporation of transcriptionally repressive histone MACROH2A1, particularily at telomeres. Binds to zinc-finger coding genes with atypical chromatin signatures and regulates its H3K9me3 levels. Forms a complex with ZNF274, TRIM28 and SETDB1 to facilitate the deposition and maintenance of H3K9me3 at the 3' exons of zinc-finger genes. The chain is Transcriptional regulator ATRX (ATRX) from Notamacropus eugenii (Tammar wallaby).